A 131-amino-acid polypeptide reads, in one-letter code: Small ribosomal subunit protein bS6 (131 aa).

The segment at 97 to 131 is disordered; it reads TEASPMAKARDERDSRRGPAGERSYDEAHAEEIAE. Basic and acidic residues predominate over residues 104 to 131; that stretch reads KARDERDSRRGPAGERSYDEAHAEEIAE.

It belongs to the bacterial ribosomal protein bS6 family.

Its function is as follows. Binds together with bS18 to 16S ribosomal RNA. The sequence is that of Small ribosomal subunit protein bS6 from Shewanella baltica (strain OS223).